Reading from the N-terminus, the 116-residue chain is Large ribosomal subunit protein uL18 (116 aa).

This sequence belongs to the universal ribosomal protein uL18 family. In terms of assembly, part of the 50S ribosomal subunit; part of the 5S rRNA/L5/L18/L25 subcomplex. Contacts the 5S and 23S rRNAs.

In terms of biological role, this is one of the proteins that bind and probably mediate the attachment of the 5S RNA into the large ribosomal subunit, where it forms part of the central protuberance. In Cellvibrio japonicus (strain Ueda107) (Pseudomonas fluorescens subsp. cellulosa), this protein is Large ribosomal subunit protein uL18.